Consider the following 467-residue polypeptide: Ribulose bisphosphate carboxylase large chain (467 aa).

At lysine 5 the chain carries N6,N6,N6-trimethyllysine. Residues asparagine 114 and threonine 164 each contribute to the substrate site. The active-site Proton acceptor is lysine 166. Substrate is bound at residue lysine 168. Residues lysine 192, aspartate 194, and glutamate 195 each coordinate Mg(2+). Lysine 192 is subject to N6-carboxylysine. Histidine 285 serves as the catalytic Proton acceptor. Residues arginine 286, histidine 318, and serine 370 each coordinate substrate.

Belongs to the RuBisCO large chain family. Type I subfamily. As to quaternary structure, heterohexadecamer of 8 large chains and 8 small chains; disulfide-linked. The disulfide link is formed within the large subunit homodimers. Mg(2+) serves as cofactor. In terms of processing, the disulfide bond which can form in the large chain dimeric partners within the hexadecamer appears to be associated with oxidative stress and protein turnover.

The protein resides in the plastid. It is found in the chloroplast. It carries out the reaction 2 (2R)-3-phosphoglycerate + 2 H(+) = D-ribulose 1,5-bisphosphate + CO2 + H2O. The catalysed reaction is D-ribulose 1,5-bisphosphate + O2 = 2-phosphoglycolate + (2R)-3-phosphoglycerate + 2 H(+). Its function is as follows. RuBisCO catalyzes two reactions: the carboxylation of D-ribulose 1,5-bisphosphate, the primary event in carbon dioxide fixation, as well as the oxidative fragmentation of the pentose substrate in the photorespiration process. Both reactions occur simultaneously and in competition at the same active site. In Scutellaria bolanderi (Sierra skullcap), this protein is Ribulose bisphosphate carboxylase large chain.